The sequence spans 386 residues: MDICVRPVWAEIDLDIIANNMKEIRNLVGEKEIIAVVKANAYGHGALDIASTLLENGASRLAVAIITEADELRDAGITAPIMILGYTPINFAENLINNEIEQTVYDVEYAKELSDFALKLGKKAKIHIAIDTGMGRIGFLPNEEGLNKVLEICSLPGVEVVGLFTHFSTSDEKDKTYTYEQFSKLTNFNKALEDNGIHIPLKHASNSGAIMDLPETYLDGVRCGIISYGYYPSEEVKKENLKLKPALTLKTNVAFVKELDEDMYVSYGRTYKTEKKSKIATLPIGYADGYSRLLSGKAKVIIKGQFANVIGRVCMDQCMVDVTHIEDVKIGDEVILLGEENGLKFDANDMAEIMGTINYEILCMISHRVPRIYKKNNEIVKVRNYI.

Lysine 38 (proton acceptor; specific for D-alanine) is an active-site residue. Lysine 38 is modified (N6-(pyridoxal phosphate)lysine). Arginine 136 is a binding site for substrate. Residue tyrosine 267 is the Proton acceptor; specific for L-alanine of the active site. Methionine 315 provides a ligand contact to substrate.

The protein belongs to the alanine racemase family. It depends on pyridoxal 5'-phosphate as a cofactor.

The catalysed reaction is L-alanine = D-alanine. It participates in amino-acid biosynthesis; D-alanine biosynthesis; D-alanine from L-alanine: step 1/1. Functionally, catalyzes the interconversion of L-alanine and D-alanine. May also act on other amino acids. In Clostridium perfringens (strain SM101 / Type A), this protein is Alanine racemase (alr).